The sequence spans 144 residues: Peptide methionine sulfoxide reductase B7 (144 aa).

In terms of domain architecture, MsrB spans 19 to 140 (DEEWRAVLSP…NSVSLKFSSA (122 aa)). Cysteine 58, cysteine 61, cysteine 104, and cysteine 107 together coordinate Zn(2+). Residues cysteine 76 and cysteine 129 are joined by a disulfide bond. The Nucleophile role is filled by cysteine 129.

Belongs to the MsrB Met sulfoxide reductase family. It depends on Zn(2+) as a cofactor.

The protein localises to the cytoplasm. Its subcellular location is the cytosol. The enzyme catalyses L-methionyl-[protein] + [thioredoxin]-disulfide + H2O = L-methionyl-(R)-S-oxide-[protein] + [thioredoxin]-dithiol. Its function is as follows. Catalyzes the reduction of methionine sulfoxide (MetSO) to methionine in proteins. Plays a protective role against oxidative stress by restoring activity to proteins that have been inactivated by methionine oxidation. MSRB family specifically reduces the MetSO R-enantiomer. This Arabidopsis thaliana (Mouse-ear cress) protein is Peptide methionine sulfoxide reductase B7 (MSRB7).